Here is a 28-residue protein sequence, read N- to C-terminus: Conotoxin de7b (28 aa).

3 cysteine pairs are disulfide-bonded: Cys-2–Cys-18, Cys-9–Cys-22, and Cys-17–Cys-27. A 4-hydroxyproline; partial modification is found at Pro-4. Glu-7 carries the 4-carboxyglutamate; partial modification. Residue Pro-14 is modified to 4-hydroxyproline; partial.

In terms of tissue distribution, expressed by the venom duct.

Its subcellular location is the secreted. Functionally, may inhibit sodium (Nav) or calcium channels (Cav). The chain is Conotoxin de7b from Conasprella delessertii (Sozon's cone).